The following is a 96-amino-acid chain: Protein RnfH (96 aa).

The protein belongs to the UPF0125 (RnfH) family.

In Klebsiella pneumoniae (strain 342), this protein is Protein RnfH.